We begin with the raw amino-acid sequence, 221 residues long: Thymine/uracil-DNA glycosylase (221 aa).

The 29-residue stretch at 105-133 (DYGGRVPRNRKAILDLPGVGKYTCAAVMC) folds into the HhH domain. Positions 197, 204, 207, and 213 each coordinate [4Fe-4S] cluster.

It belongs to the Nth/MutY family. The cofactor is [4Fe-4S] cluster.

It carries out the reaction Hydrolyzes mismatched double-stranded DNA and polynucleotides, releasing free thymine.. Functionally, DNA glycosylase that excises thymine from T/G mismatches and uracil from U/G mismatches. Acts as a repair enzyme able to counteract the mutagenic effect of spontaneous hydrolytic deamination of DNA 5-methylcytosine (5-meC) residues that leads to the formation of T/G mismatches. May also repair U/G mismatches arising from hydrolytic deamination of DNA cytosine residues. G/G, A/G, T/C and U/C are minor substrates. The sequence is that of Thymine/uracil-DNA glycosylase from Methanothermobacter thermautotrophicus (Methanobacterium thermoformicicum).